A 138-amino-acid chain; its full sequence is Biopolymer transport protein exbD1 (138 aa).

Over 1–16 (MIKSSAKHNDFGLTPD) the chain is Cytoplasmic. Residues 17 to 37 (LTPLLDIIFIVMVFLLLTASV) form a helical membrane-spanning segment. The Periplasmic segment spans residues 38 to 138 (RLESLEVALP…TQLLTEPSHS (101 aa)).

It belongs to the ExbD/TolR family. In terms of assembly, the accessory proteins ExbB and ExbD seem to form a complex with TonB.

Its subcellular location is the cell inner membrane. Its function is as follows. Involved in the TonB-dependent energy-dependent transport of various receptor-bound substrates. This is Biopolymer transport protein exbD1 (exbD1) from Vibrio cholerae serotype O1 (strain ATCC 39315 / El Tor Inaba N16961).